Consider the following 520-residue polypeptide: MAPVALLSVSDKSGLLPLAEALHRIHGYQLLSSGGTAKVLEQAGLPVTRVSEYTGAPEILGGRVKTLHPRVHGGILAKRGDAAHQNDLEQQNINFIDVVVVNLYPFRETVAKADVTWDQAIENIDIGGPTMVRSAAKNHADVAVLTSPDQYDRLLEAMAQAGGEVPAALRRQLALEAFQHTAAYDTAISRWMDQAVAADGSPWLEAVPLRQTLRYGENPHQKARWYSHAQQGWGGAVQLQGKELSTNNLLDLEAALAMVREFGYGSDGAEPAVQPAAVVVKHTNPCGVAIGSDVSTALTRALDADRVSAFGGIVAINGVVSAAAAGELKSLFLECVVAPSFSPEAREILAAKANLRLLELQPAAIDAAGPDHVRSILGGLLVQDLDDQAITPSEWTVASQRPPSSQEQQDLEFAWRLVRHVRSNAIVVASKGQSLGIGAGQMNRVGSARLALDAAGDQATGAVLASDGFFPFDDTVRLAASHGITAVIHPGGSLRDADSIKACDELGLAMLLTGRRHFLH.

Residues 1–146 (MAPVALLSVS…KNHADVAVLT (146 aa)) enclose the MGS-like domain.

It belongs to the PurH family.

It catalyses the reaction (6R)-10-formyltetrahydrofolate + 5-amino-1-(5-phospho-beta-D-ribosyl)imidazole-4-carboxamide = 5-formamido-1-(5-phospho-D-ribosyl)imidazole-4-carboxamide + (6S)-5,6,7,8-tetrahydrofolate. The catalysed reaction is IMP + H2O = 5-formamido-1-(5-phospho-D-ribosyl)imidazole-4-carboxamide. It participates in purine metabolism; IMP biosynthesis via de novo pathway; 5-formamido-1-(5-phospho-D-ribosyl)imidazole-4-carboxamide from 5-amino-1-(5-phospho-D-ribosyl)imidazole-4-carboxamide (10-formyl THF route): step 1/1. Its pathway is purine metabolism; IMP biosynthesis via de novo pathway; IMP from 5-formamido-1-(5-phospho-D-ribosyl)imidazole-4-carboxamide: step 1/1. This Synechococcus sp. (strain CC9902) protein is Bifunctional purine biosynthesis protein PurH.